A 476-amino-acid polypeptide reads, in one-letter code: Immune evasion protein OPG047 (476 aa).

In terms of domain architecture, BTB spans 10–90; that stretch reads CKNILALSMT…SYTGKVYIDS (81 aa). A BACK domain is found at 125–218; it reads CVECYMMGIE…SNYLSPRGIN (94 aa). Kelch repeat units follow at residues 269–315, 316–359, 361–404, 406–443, and 444–476; these read VVYL…PANN, KLYV…SINN, IYVM…VFGR, LFLVGRNAEFYCESSNTWTLIDDPIYPRDNPELIIVDN, and KLLLIGGFYRESYIDTIEVYNHHTYSWNIWDGK.

The protein belongs to the orthopoxvirus OPG047 family.

Might have a role in the suppression of host immune response. This Vaccinia virus (strain Ankara) (VACV) protein is Immune evasion protein OPG047 (OPG047).